We begin with the raw amino-acid sequence, 215 residues long: 16S rRNA (adenine(1408)-N(1))-methyltransferase (215 aa).

Residues Gly32, Asp55, Ala87–Glu88, Leu102–Ser107, and Thr191–Trp193 each bind S-adenosyl-L-methionine.

This sequence belongs to the methyltransferase superfamily. Kanamycin-apramycin resistance family.

The enzyme catalyses adenosine(1408) in 16S rRNA + S-adenosyl-L-methionine = N(1)-methyladenosine(1408) in 16S rRNA + S-adenosyl-L-homocysteine + H(+). Functionally, specifically methylates the N(1) position of adenine 1408 in 16S rRNA. Confers resistance to various aminoglycosides. The protein is 16S rRNA (adenine(1408)-N(1))-methyltransferase (kamB) of Streptoalloteichus hindustanus.